Reading from the N-terminus, the 219-residue chain is Dynein light chain Tctex-type 4 (219 aa).

A disordered region spans residues 1-84 (MACRTLPSRR…RRPSLGPVPP (84 aa)). A compositionally biased stretch (basic and acidic residues) spans 9–20 (RRQEEETTKDLA). Ser-64 bears the Phosphoserine mark.

This sequence belongs to the dynein light chain Tctex-type family. As to quaternary structure, interacts with ENG/endoglin, TGFBR2 and TGFBR3. Interacts with PPP1CC.

Its subcellular location is the cell projection. It is found in the cilium. The protein localises to the flagellum. The protein resides in the cytoplasmic vesicle. It localises to the secretory vesicle. Its subcellular location is the acrosome. It is found in the cytoplasm. The protein localises to the cytoskeleton. The protein resides in the cilium axoneme. It localises to the nucleus. Its subcellular location is the microtubule organizing center. The sequence is that of Dynein light chain Tctex-type 4 (Dynlt4) from Mus musculus (Mouse).